The chain runs to 192 residues: Large ribosomal subunit protein uL3 (192 aa).

The protein belongs to the universal ribosomal protein uL3 family. Part of the 50S ribosomal subunit. Forms a cluster with proteins L14 and L19.

Its function is as follows. One of the primary rRNA binding proteins, it binds directly near the 3'-end of the 23S rRNA, where it nucleates assembly of the 50S subunit. The chain is Large ribosomal subunit protein uL3 (rplC) from Helicobacter hepaticus (strain ATCC 51449 / 3B1).